A 136-amino-acid chain; its full sequence is Large ribosomal subunit protein bL17 (136 aa).

This sequence belongs to the bacterial ribosomal protein bL17 family. Part of the 50S ribosomal subunit. Contacts protein L32.

The chain is Large ribosomal subunit protein bL17 from Akkermansia muciniphila (strain ATCC BAA-835 / DSM 22959 / JCM 33894 / BCRC 81048 / CCUG 64013 / CIP 107961 / Muc).